Here is a 231-residue protein sequence, read N- to C-terminus: Large ribosomal subunit protein uL3 (231 aa).

Q151 is modified (N5-methylglutamine).

This sequence belongs to the universal ribosomal protein uL3 family. As to quaternary structure, part of the 50S ribosomal subunit. Forms a cluster with proteins L14 and L19. Post-translationally, methylated by PrmB.

In terms of biological role, one of the primary rRNA binding proteins, it binds directly near the 3'-end of the 23S rRNA, where it nucleates assembly of the 50S subunit. This chain is Large ribosomal subunit protein uL3, found in Ehrlichia canis (strain Jake).